The following is a 467-amino-acid chain: Ankyrin repeat and SOCS box protein 10 (467 aa).

7 ANK repeats span residues 115–144 (ELTTPLHVAASRGHTEVLELLLRRRAKPDS), 147–176 (GGRTALHEACSAGHAACVRVLLVAGADPNT), 180–209 (DGKRPLHLCRGPGILECVELLLKFGAQVDG), 214–243 (EEETPLHIAARLGHVELADLLLRWGACPDV), 247–289 (EGWT…DADA), 293–322 (DKQRPLHLACRHGHSAVVQLLLSCGVNANA), and 326–361 (GGHTPLHCALLGPTTAVAHSPEHTVRDLLNHGAVRV). The 56-residue stretch at 412 to 467 (YSSLFALVRQPRSLQHLCRCALRSHLEGCLPHALPRLPLPPRMLRFLQLDFEDLLY) folds into the SOCS box domain.

This sequence belongs to the ankyrin SOCS box (ASB) family.

The protein localises to the nucleus. Its subcellular location is the cytoplasm. It functions in the pathway protein modification; protein ubiquitination. In terms of biological role, may be a substrate-recognition component of a SCF-like ECS (Elongin-Cullin-SOCS-box protein) E3 ubiquitin-protein ligase complex which mediates the ubiquitination and subsequent proteasomal degradation of target proteins. This is Ankyrin repeat and SOCS box protein 10 (Asb10) from Mus musculus (Mouse).